A 277-amino-acid chain; its full sequence is Caspase-3 (277 aa).

The residue at position 1 (Met1) is an N-acetylmethionine. 2 consecutive propeptides follow at residues 1-9 and 10-28; these read MENTENSVD and SKSI…QSMD. Polar residues predominate over residues 1–10; the sequence is MENTENSVDS. The segment at 1–20 is disordered; it reads MENTENSVDSKSIKNLEPKI. Lys11 is modified (N6-acetyllysine). Over residues 11–20 the composition is skewed to basic and acidic residues; that stretch reads KSIKNLEPKI. Ser26 carries the phosphoserine modification. Residues His121 and Cys163 contribute to the active site. Cys163 carries the S-nitrosocysteine; in inhibited form modification.

This sequence belongs to the peptidase C14A family. As to quaternary structure, heterotetramer that consists of two anti-parallel arranged heterodimers, each one formed by a 17 kDa (p17) and a 12 kDa (p12) subunit. Interacts with BIRC6/bruce. In terms of processing, cleavage by granzyme B, caspase-6, caspase-8 and caspase-10 generates the two active subunits. Additional processing of the propeptides is likely due to the autocatalytic activity of the activated protease. Active heterodimers between the small subunit of caspase-7 protease and the large subunit of caspase-3 also occur and vice versa. Post-translationally, S-nitrosylated on its catalytic site cysteine in unstimulated cell lines and denitrosylated upon activation of the Fas apoptotic pathway, associated with an increase in intracellular caspase activity. Fas therefore activates caspase-3 not only by inducing the cleavage of the caspase zymogen to its active subunits, but also by stimulating the denitrosylation of its active site thiol. Ubiquitinated by BIRC6; this activity is inhibited by DIABLO/SMAC.

It is found in the cytoplasm. It catalyses the reaction Strict requirement for an Asp residue at positions P1 and P4. It has a preferred cleavage sequence of Asp-Xaa-Xaa-Asp-|- with a hydrophobic amino-acid residue at P2 and a hydrophilic amino-acid residue at P3, although Val or Ala are also accepted at this position.. Its activity is regulated as follows. Inhibited by BIRC6; following inhibition of BIRC6-caspase binding by DIABLO/SMAC, BIRC6 is subjected to caspase cleavage, leading to an increase in active caspases. Involved in the activation cascade of caspases responsible for apoptosis execution. At the onset of apoptosis, it proteolytically cleaves poly(ADP-ribose) polymerase PARP1 at a '216-Asp-|-Gly-217' bond. Cleaves and activates sterol regulatory element binding proteins (SREBPs) between the basic helix-loop-helix leucine zipper domain and the membrane attachment domain. Cleaves and activates caspase-6, -7 and -9 (CASP6, CASP7 and CASP9, respectively). Cleaves and inactivates interleukin-18 (IL18). Triggers cell adhesion in sympathetic neurons through RET cleavage. Cleaves IL-1 beta between an Asp and an Ala, releasing the mature cytokine which is involved in a variety of inflammatory processes. Cleaves and inhibits serine/threonine-protein kinase AKT1 in response to oxidative stress. Acts as an inhibitor of type I interferon production during virus-induced apoptosis by mediating cleavage of antiviral proteins CGAS, IRF3 and MAVS, thereby preventing cytokine overproduction. Also involved in pyroptosis by mediating cleavage and activation of gasdermin-E (GSDME). Cleaves XRCC4 and phospholipid scramblase proteins XKR4, XKR8 and XKR9, leading to promote phosphatidylserine exposure on apoptotic cell surface. Cleaves BIRC6 following inhibition of BIRC6-caspase binding by DIABLO/SMAC. This chain is Caspase-3 (CASP3), found in Pan troglodytes (Chimpanzee).